Consider the following 150-residue polypeptide: AWITGQGLGWEAKKEEAFLRSGTQFSGAEGLALPQDGLYYLYCHVGYRGRAPPPGGDPLDRSVTLLSRLYRAGGAYGPGTPELLLEGAETVTPVLDPSRRHEYGPLWYTSVGFGGLVQLRRGERVYVNISHPDMVDYRRGKTFFGAVMVG.

One can recognise a THD domain in the interval 1 to 149; that stretch reads AWITGQGLGW…GKTFFGAVMV (149 aa). N-linked (GlcNAc...) asparagine glycosylation occurs at asparagine 128.

It belongs to the tumor necrosis factor family. In terms of assembly, heterotrimer of either two LTB and one LTA subunits or (less prevalent) two LTA and one LTB subunits.

The protein localises to the membrane. Cytokine that binds to LTBR/TNFRSF3. May play a specific role in immune response regulation. Provides the membrane anchor for the attachment of the heterotrimeric complex to the cell surface. The protein is Lymphotoxin-beta (LTB) of Sus scrofa (Pig).